Consider the following 151-residue polypeptide: MMYRTTLNTVQVSQISGAEFYPHASSRAILFESPAFCRLFFSPFVYLAVGKQTTQYLLLVPTVKEGLFWDVFFSCFCSIDYPIHSKAQSQWSPQENLRREPLERRRTQMPLRGLCPPTCFSLTKTEILFVLKIQISHLDKSARSWVRSGRL.

This is an uncharacterized protein from Saccharomyces cerevisiae (strain ATCC 204508 / S288c) (Baker's yeast).